Here is a 359-residue protein sequence, read N- to C-terminus: Alanine racemase (359 aa).

Lys-35 (proton acceptor; specific for D-alanine) is an active-site residue. Lys-35 bears the N6-(pyridoxal phosphate)lysine mark. Arg-131 contacts substrate. Tyr-253 acts as the Proton acceptor; specific for L-alanine in catalysis. Met-301 provides a ligand contact to substrate.

Belongs to the alanine racemase family. Pyridoxal 5'-phosphate is required as a cofactor.

It catalyses the reaction L-alanine = D-alanine. It functions in the pathway amino-acid biosynthesis; D-alanine biosynthesis; D-alanine from L-alanine: step 1/1. Functionally, catalyzes the interconversion of L-alanine and D-alanine. May also act on other amino acids. The chain is Alanine racemase (alr) from Laribacter hongkongensis (strain HLHK9).